Consider the following 204-residue polypeptide: 8-oxoguanine DNA glycosylase/AP lyase (204 aa).

Catalysis depends on residues K128 and D146.

This sequence belongs to the type-2 OGG1 family.

The catalysed reaction is 2'-deoxyribonucleotide-(2'-deoxyribose 5'-phosphate)-2'-deoxyribonucleotide-DNA = a 3'-end 2'-deoxyribonucleotide-(2,3-dehydro-2,3-deoxyribose 5'-phosphate)-DNA + a 5'-end 5'-phospho-2'-deoxyribonucleoside-DNA + H(+). In terms of biological role, catalyzes the excision of an oxidatively damaged form of guanine (7,8-dihydro-8-oxoguanine = 8-oxoG) from DNA. Also cleaves the DNA backbone at apurinic/apyrimidinic sites (AP sites). The protein is 8-oxoguanine DNA glycosylase/AP lyase of Sulfurisphaera tokodaii (strain DSM 16993 / JCM 10545 / NBRC 100140 / 7) (Sulfolobus tokodaii).